The primary structure comprises 346 residues: MGVTELGKLIGKEVRREVKLESLSGKCIALDAYNALYQFLASIRQPDGTPLMDRAGRITSHLSGLFYRTINLLEAGIRPVYVFDGKPPEFKLAEIEERRKTREKAMEEVLRAIKEGRREDVAKYAKRAVFITSEMVDEAKRLLSYMGVPWVQAPSEGEAQAAYMARKGHCWAVGSQDYDSLLFGSPKLVRNLAVSPKRKIGEEVIELTPEIIELDAVLRALRLKNREQLIDLAILLGTDYNPDGVPGVGPQKALKLIWEFGSLEKLLETVLKGAYFPIDPLEIKKFFLNPPVTDQYATEVRDPDEAALKDFLIREHDFSEERVSKALERLRKARGKLKTSSLDSFF.

Positions 1–102 (MGVTELGKLI…AEIEERRKTR (102 aa)) are N-domain. Mg(2+) is bound by residues D31, D84, E156, E158, D177, D179, and D239. Residues 120 to 261 (DVAKYAKRAV…KALKLIWEFG (142 aa)) form an I-domain region.

The protein belongs to the XPG/RAD2 endonuclease family. FEN1 subfamily. As to quaternary structure, interacts with PCNA. PCNA stimulates the nuclease activity without altering cleavage specificity. Mg(2+) is required as a cofactor.

Structure-specific nuclease with 5'-flap endonuclease and 5'-3' exonuclease activities involved in DNA replication and repair. During DNA replication, cleaves the 5'-overhanging flap structure that is generated by displacement synthesis when DNA polymerase encounters the 5'-end of a downstream Okazaki fragment. Binds the unpaired 3'-DNA end and kinks the DNA to facilitate 5' cleavage specificity. Cleaves one nucleotide into the double-stranded DNA from the junction in flap DNA, leaving a nick for ligation. Also involved in the base excision repair (BER) pathway. Acts as a genome stabilization factor that prevents flaps from equilibrating into structures that lead to duplications and deletions. Also possesses 5'-3' exonuclease activity on nicked or gapped double-stranded DNA. This chain is Flap endonuclease 1, found in Pyrobaculum aerophilum (strain ATCC 51768 / DSM 7523 / JCM 9630 / CIP 104966 / NBRC 100827 / IM2).